A 483-amino-acid polypeptide reads, in one-letter code: ATP synthase subunit beta, chloroplastic (483 aa).

Residue 163–170 (GGAGVGKT) participates in ATP binding.

Belongs to the ATPase alpha/beta chains family. F-type ATPases have 2 components, CF(1) - the catalytic core - and CF(0) - the membrane proton channel. CF(1) has five subunits: alpha(3), beta(3), gamma(1), delta(1), epsilon(1). CF(0) has four main subunits: a(1), b(1), b'(1) and c(9-12).

The protein resides in the plastid. It localises to the chloroplast thylakoid membrane. It catalyses the reaction ATP + H2O + 4 H(+)(in) = ADP + phosphate + 5 H(+)(out). Its function is as follows. Produces ATP from ADP in the presence of a proton gradient across the membrane. The catalytic sites are hosted primarily by the beta subunits. The protein is ATP synthase subunit beta, chloroplastic of Ostreococcus tauri.